Consider the following 241-residue polypeptide: Ribonuclease PH (241 aa).

Phosphate-binding positions include R89 and 127–129 (GTR).

It belongs to the RNase PH family. Homohexameric ring arranged as a trimer of dimers.

It carries out the reaction tRNA(n+1) + phosphate = tRNA(n) + a ribonucleoside 5'-diphosphate. In terms of biological role, phosphorolytic 3'-5' exoribonuclease that plays an important role in tRNA 3'-end maturation. Removes nucleotide residues following the 3'-CCA terminus of tRNAs; can also add nucleotides to the ends of RNA molecules by using nucleoside diphosphates as substrates, but this may not be physiologically important. Probably plays a role in initiation of 16S rRNA degradation (leading to ribosome degradation) during starvation. The protein is Ribonuclease PH of Stenotrophomonas maltophilia (strain K279a).